A 355-amino-acid polypeptide reads, in one-letter code: Protein RecA (355 aa).

Residue Gly-67–Thr-74 coordinates ATP.

This sequence belongs to the RecA family.

It is found in the cytoplasm. Can catalyze the hydrolysis of ATP in the presence of single-stranded DNA, the ATP-dependent uptake of single-stranded DNA by duplex DNA, and the ATP-dependent hybridization of homologous single-stranded DNAs. It interacts with LexA causing its activation and leading to its autocatalytic cleavage. This chain is Protein RecA, found in Shewanella piezotolerans (strain WP3 / JCM 13877).